The following is a 403-amino-acid chain: Sex hormone-binding globulin (403 aa).

Residues 1-30 form the signal peptide; it reads MEKGEVASLRCRLLLLLLLLTLPPTHQGRT. Laminin G-like domains lie at 46–218 and 225–391; these read KYLS…LGNC and GLFF…THSC. Residues C194 and C218 are joined by a disulfide bond. N274 carries an N-linked (GlcNAc...) asparagine glycan. The cysteines at positions 363 and 391 are disulfide-linked. N397 is a glycosylation site (N-linked (GlcNAc...) asparagine).

As to quaternary structure, homodimer. In terms of tissue distribution, isoform 2 is only expressed in the liver.

The protein resides in the secreted. Functions as an androgen transport protein, but may also be involved in receptor mediated processes. Each dimer binds one molecule of steroid. Specific for 5-alpha-dihydrotestosterone, testosterone, and 17-beta-estradiol. Regulates the plasma metabolic clearance rate of steroid hormones by controlling their plasma concentration. The protein is Sex hormone-binding globulin (Shbg) of Rattus norvegicus (Rat).